The following is a 279-amino-acid chain: Tryptophan synthase alpha chain (279 aa).

Catalysis depends on proton acceptor residues Glu50 and Asp61.

The protein belongs to the TrpA family. In terms of assembly, tetramer of two alpha and two beta chains.

The enzyme catalyses (1S,2R)-1-C-(indol-3-yl)glycerol 3-phosphate + L-serine = D-glyceraldehyde 3-phosphate + L-tryptophan + H2O. Its pathway is amino-acid biosynthesis; L-tryptophan biosynthesis; L-tryptophan from chorismate: step 5/5. Functionally, the alpha subunit is responsible for the aldol cleavage of indoleglycerol phosphate to indole and glyceraldehyde 3-phosphate. The chain is Tryptophan synthase alpha chain from Rhizobium etli (strain ATCC 51251 / DSM 11541 / JCM 21823 / NBRC 15573 / CFN 42).